Here is a 39-residue protein sequence, read N- to C-terminus: Cytochrome b559 subunit beta (39 aa).

Residues 14–30 (WLAVHGLAVPTVFFLGS) traverse the membrane as a helical segment. A heme-binding site is contributed by H18.

It belongs to the PsbE/PsbF family. In terms of assembly, heterodimer of an alpha subunit and a beta subunit. PSII is composed of 1 copy each of membrane proteins PsbA, PsbB, PsbC, PsbD, PsbE, PsbF, PsbH, PsbI, PsbJ, PsbK, PsbL, PsbM, PsbT, PsbX, PsbY, PsbZ, Psb30/Ycf12, at least 3 peripheral proteins of the oxygen-evolving complex and a large number of cofactors. It forms dimeric complexes. The cofactor is heme b.

The protein localises to the plastid. It localises to the chloroplast thylakoid membrane. Functionally, this b-type cytochrome is tightly associated with the reaction center of photosystem II (PSII). PSII is a light-driven water:plastoquinone oxidoreductase that uses light energy to abstract electrons from H(2)O, generating O(2) and a proton gradient subsequently used for ATP formation. It consists of a core antenna complex that captures photons, and an electron transfer chain that converts photonic excitation into a charge separation. This Nicotiana glutinosa (Tobacco) protein is Cytochrome b559 subunit beta.